A 118-amino-acid polypeptide reads, in one-letter code: Ribulose bisphosphate carboxylase small subunit (118 aa).

It belongs to the RuBisCO small chain family. As to quaternary structure, heterohexadecamer of 8 large and 8 small subunits.

The protein resides in the carboxysome. In terms of biological role, ruBisCO catalyzes two reactions: the carboxylation of D-ribulose 1,5-bisphosphate, the primary event in carbon dioxide fixation, as well as the oxidative fragmentation of the pentose substrate in the photorespiration process. Both reactions occur simultaneously and in competition at the same active site. Although the small subunit is not catalytic it is essential for maximal activity. In Thermosynechococcus vestitus (strain NIES-2133 / IAM M-273 / BP-1), this protein is Ribulose bisphosphate carboxylase small subunit.